The sequence spans 206 residues: Uridine kinase (206 aa).

Gly-11–Thr-18 contacts ATP.

The protein belongs to the uridine kinase family.

The protein resides in the cytoplasm. It carries out the reaction uridine + ATP = UMP + ADP + H(+). The enzyme catalyses cytidine + ATP = CMP + ADP + H(+). Its pathway is pyrimidine metabolism; CTP biosynthesis via salvage pathway; CTP from cytidine: step 1/3. The protein operates within pyrimidine metabolism; UMP biosynthesis via salvage pathway; UMP from uridine: step 1/1. The polypeptide is Uridine kinase (Macrococcus caseolyticus (strain JCSC5402) (Macrococcoides caseolyticum)).